The primary structure comprises 405 residues: L-rhamnonate dehydratase (405 aa).

Residues histidine 33 and arginine 59 each coordinate substrate. Residues aspartate 226, glutamate 252, and glutamate 280 each contribute to the Mg(2+) site. The active-site Proton acceptor is the histidine 329. Glutamate 349 is a substrate binding site.

The protein belongs to the mandelate racemase/muconate lactonizing enzyme family. RhamD subfamily. As to quaternary structure, homooctamer; tetramer of dimers. Mg(2+) serves as cofactor.

The enzyme catalyses L-rhamnonate = 2-dehydro-3-deoxy-L-rhamnonate + H2O. Its function is as follows. Catalyzes the dehydration of L-rhamnonate to 2-keto-3-deoxy-L-rhamnonate (KDR). The polypeptide is L-rhamnonate dehydratase (Escherichia coli O81 (strain ED1a)).